The following is an 852-amino-acid chain: Translation initiation factor IF-2 (852 aa).

Residues 1–240 (MEDKNKTIKE…KTSSDKRDFS (240 aa)) are disordered. Residues 78–90 (KEVKYEESSRKQD) show a composition bias toward basic and acidic residues. The segment covering 106-120 (VRPSGDSSYPVSRSP) has biased composition (polar residues). Positions 150 to 200 (RGPGQGGGYQGNRGPGQGGGYQGNRGPGQQTGPGNRFGGSGPGNRSGGPGG) are enriched in gly residues. Residues 227–240 (HDKEKTSSDKRDFS) show a composition bias toward basic and acidic residues. Positions 347 to 516 (NRPPVVTIMG…LLQAEVMDLK (170 aa)) constitute a tr-type G domain. A G1 region spans residues 356 to 363 (GHVDHGKT). A GTP-binding site is contributed by 356–363 (GHVDHGKT). Residues 381–385 (GITQH) form a G2 region. The interval 402–405 (DTPG) is G3. Residues 402 to 406 (DTPGH) and 456 to 459 (NKID) contribute to the GTP site. The segment at 456-459 (NKID) is G4. Residues 492–494 (SAR) form a G5 region.

It belongs to the TRAFAC class translation factor GTPase superfamily. Classic translation factor GTPase family. IF-2 subfamily.

Its subcellular location is the cytoplasm. In terms of biological role, one of the essential components for the initiation of protein synthesis. Protects formylmethionyl-tRNA from spontaneous hydrolysis and promotes its binding to the 30S ribosomal subunits. Also involved in the hydrolysis of GTP during the formation of the 70S ribosomal complex. In Leptospira borgpetersenii serovar Hardjo-bovis (strain JB197), this protein is Translation initiation factor IF-2.